Reading from the N-terminus, the 313-residue chain is D-alanine--D-alanine ligase (313 aa).

The 201-residue stretch at 108–308 (KLVWQQTGVP…YSELVVKVLS (201 aa)) folds into the ATP-grasp domain. 138 to 193 (VAKLGLPLFVKPASEGSSVAVLKVKTADALPAALEEAATHDKIVIVEKSIEGGGEY) provides a ligand contact to ATP. Residues Asp-262, Glu-275, and Asn-277 each contribute to the Mg(2+) site.

Belongs to the D-alanine--D-alanine ligase family. It depends on Mg(2+) as a cofactor. The cofactor is Mn(2+).

It is found in the cytoplasm. The catalysed reaction is 2 D-alanine + ATP = D-alanyl-D-alanine + ADP + phosphate + H(+). It functions in the pathway cell wall biogenesis; peptidoglycan biosynthesis. Its function is as follows. Cell wall formation. This chain is D-alanine--D-alanine ligase, found in Burkholderia cenocepacia (strain ATCC BAA-245 / DSM 16553 / LMG 16656 / NCTC 13227 / J2315 / CF5610) (Burkholderia cepacia (strain J2315)).